We begin with the raw amino-acid sequence, 686 residues long: MAM domain-containing protein 2 (686 aa).

Positions 1–18 (MLLRGVLLALQALQLAGA) are cleaved as a signal peptide. MAM domains follow at residues 24–169 (GSCA…YCIE), 168–329 (IECD…HCQN), 340–498 (ASCN…SCSS), and 507–666 (GECT…PCGE). N-linked (GlcNAc...) asparagine glycans are attached at residues Asn134 and Asn329. Disordered regions lie at residues 521-543 (EKRNRSSWHRRRGETPTSYTGPK) and 665-686 (GEMEDTTQQSSGYSEDLNEIEY). Asn524 is a glycosylation site (N-linked (GlcNAc...) asparagine).

In terms of processing, O-glycosylated.

The protein resides in the secreted. The protein localises to the extracellular space. It localises to the extracellular matrix. The protein is MAM domain-containing protein 2 (MAMDC2) of Homo sapiens (Human).